Consider the following 485-residue polypeptide: MQISNSYLQLGDDFYLPSTPRQPSNPQLFLWNQGLAESLGVADFLAQEQEDPAGFFSGGRLLPNSKPVALAYAGHQFGHFNPRLGDGRAHLLGELRGDTDMVFDVQLKGSGATPFSRGGDGLCGLGPAVREFIMSEAMAALGVPTSRTLAVVTTGDEVYRGDAVPGAVVCRVAASHLRVGTFEYFYAQGNKDAIERLCDYAISRHFPELASSEGPEKYSGFLRAVFSRQVELVCEWLRVGFVHGVMNTDNTTISGETIDYGPCAMISTYNPNTVFSSIDAMGRYRFGHQPSIAHWNMARLTECFLPLLDQDSKQATAIGESLLGEFPQNFEQRYHHMLASKTGVRLQGDSDKALCEDFLQLLRKQGLDYTNSFDSLTRSLIDPQHEDRCASQWPEWYQAWSARIEQQGRPREVVAEGMRRHNPVVIPRNHHMEAVIDECIKNGSPDAAKSWLKVLRRPYQDLPTTPNYQDPPADGDRSYQTFCGT.

The ATP site is built by Gly-85, Gly-87, Arg-88, Lys-108, Asp-120, Gly-121, Arg-171, and Arg-178. Asp-249 functions as the Proton acceptor in the catalytic mechanism. Mg(2+)-binding residues include Asn-250 and Asp-259. ATP is bound at residue Asp-259. The tract at residues 462-485 (LPTTPNYQDPPADGDRSYQTFCGT) is disordered.

Belongs to the SELO family. Mg(2+) serves as cofactor. It depends on Mn(2+) as a cofactor.

The enzyme catalyses L-seryl-[protein] + ATP = 3-O-(5'-adenylyl)-L-seryl-[protein] + diphosphate. It carries out the reaction L-threonyl-[protein] + ATP = 3-O-(5'-adenylyl)-L-threonyl-[protein] + diphosphate. It catalyses the reaction L-tyrosyl-[protein] + ATP = O-(5'-adenylyl)-L-tyrosyl-[protein] + diphosphate. The catalysed reaction is L-histidyl-[protein] + UTP = N(tele)-(5'-uridylyl)-L-histidyl-[protein] + diphosphate. The enzyme catalyses L-seryl-[protein] + UTP = O-(5'-uridylyl)-L-seryl-[protein] + diphosphate. It carries out the reaction L-tyrosyl-[protein] + UTP = O-(5'-uridylyl)-L-tyrosyl-[protein] + diphosphate. Nucleotidyltransferase involved in the post-translational modification of proteins. It can catalyze the addition of adenosine monophosphate (AMP) or uridine monophosphate (UMP) to a protein, resulting in modifications known as AMPylation and UMPylation. This is Protein nucleotidyltransferase YdiU from Teredinibacter turnerae (strain ATCC 39867 / T7901).